The following is a 378-amino-acid chain: Chorismate synthase (378 aa).

Residue Arg-50 coordinates NADP(+). FMN is bound by residues 127-129 (RAS), 255-256 (NA), Gly-300, 315-319 (KPTPS), and Arg-342.

This sequence belongs to the chorismate synthase family. The cofactor is FMNH2.

It catalyses the reaction 5-O-(1-carboxyvinyl)-3-phosphoshikimate = chorismate + phosphate. It functions in the pathway metabolic intermediate biosynthesis; chorismate biosynthesis; chorismate from D-erythrose 4-phosphate and phosphoenolpyruvate: step 7/7. Catalyzes the anti-1,4-elimination of the C-3 phosphate and the C-6 proR hydrogen from 5-enolpyruvylshikimate-3-phosphate (EPSP) to yield chorismate, which is the branch point compound that serves as the starting substrate for the three terminal pathways of aromatic amino acid biosynthesis. This reaction introduces a second double bond into the aromatic ring system. This chain is Chorismate synthase, found in Methanocaldococcus jannaschii (strain ATCC 43067 / DSM 2661 / JAL-1 / JCM 10045 / NBRC 100440) (Methanococcus jannaschii).